A 335-amino-acid chain; its full sequence is Succinylglutamate desuccinylase (335 aa).

Zn(2+)-binding residues include H59, E62, and H151. E215 is a catalytic residue.

Belongs to the AspA/AstE family. Succinylglutamate desuccinylase subfamily. It depends on Zn(2+) as a cofactor.

It catalyses the reaction N-succinyl-L-glutamate + H2O = L-glutamate + succinate. It functions in the pathway amino-acid degradation; L-arginine degradation via AST pathway; L-glutamate and succinate from L-arginine: step 5/5. In terms of biological role, transforms N(2)-succinylglutamate into succinate and glutamate. This Pseudomonas putida (strain ATCC 47054 / DSM 6125 / CFBP 8728 / NCIMB 11950 / KT2440) protein is Succinylglutamate desuccinylase.